Reading from the N-terminus, the 647-residue chain is Carotenoid phi-ring synthase (647 aa).

FAD is bound by residues alanine 67, 86 to 87 (EA), lysine 94, and tyrosine 120. The region spanning 322–416 (VASIPKREVP…VREAGEMLVI (95 aa)) is the Rieske domain. Positions 362, 364, 380, and 383 each coordinate [2Fe-2S] cluster. FAD-binding residues include aspartate 601 and methionine 612.

This sequence belongs to the carotenoid/retinoid oxidoreductase family. FAD is required as a cofactor. [2Fe-2S] cluster serves as cofactor.

The catalysed reaction is a carotenoid beta-end derivative + 2 A = a carotenoid phi-end derivative + 2 AH2. Its pathway is carotenoid biosynthesis. Functionally, involved in the biosynthesis of chlorobactene, a carotenoid with aromatic end group. Catalyzes the introduction of two additional double bonds into the ionone ring of gamma-carotene to produce chlorobactene. The reaction includes an intramolecular methyl transfer from position C1 to position C2 of the ring. The protein is Carotenoid phi-ring synthase of Chlorobaculum tepidum (strain ATCC 49652 / DSM 12025 / NBRC 103806 / TLS) (Chlorobium tepidum).